The primary structure comprises 474 residues: uncharacterized protein (474 aa).

Positions 1–14 are enriched in polar residues; the sequence is MGSRYPSHQLSNGL. The interval 1–137 is disordered; it reads MGSRYPSHQL…QSGGVTRQNS (137 aa). Ser-45 is modified (phosphoserine). Composition is skewed to polar residues over residues 73–83, 97–113, and 125–137; these read RSGSFAGTAQS, SLASAGSVSMKKTNSGP, and SGPQSGGVTRQNS. Residue Ser-169 is modified to Phosphoserine. 2 helical membrane passes run 210-230 and 236-256; these read VLWLVVLIFIMGFLAGGFILG and ILLVVVAILFTVVAALFIWNI.

It is found in the membrane. This is an uncharacterized protein from Arabidopsis thaliana (Mouse-ear cress).